The chain runs to 207 residues: MANVTLFDQTGKQAGEVVLNDAIFGIEPNQAVVFDVIISQRASLRQGTHAVKNRSAVSGGGRKPWRQKGTGRARQGSIRSPQWRGGGVVFGPTPRSYAYKLPQKVRRLALKSVYSEKVAENKFVAVNSLEFTAPKTAEFAKVLAALSIDSKVLVILEEGNEFAALSARNIPGVKVATATTASVLDIANADKLLVTQAAISKIEEVLA.

The disordered stretch occupies residues 49–78 (HAVKNRSAVSGGGRKPWRQKGTGRARQGSI).

This sequence belongs to the universal ribosomal protein uL4 family. Part of the 50S ribosomal subunit.

In terms of biological role, one of the primary rRNA binding proteins, this protein initially binds near the 5'-end of the 23S rRNA. It is important during the early stages of 50S assembly. It makes multiple contacts with different domains of the 23S rRNA in the assembled 50S subunit and ribosome. Forms part of the polypeptide exit tunnel. This is Large ribosomal subunit protein uL4 from Streptococcus suis (strain 98HAH33).